We begin with the raw amino-acid sequence, 357 residues long: S-adenosylmethionine:tRNA ribosyltransferase-isomerase (357 aa).

Belongs to the QueA family. Monomer.

Its subcellular location is the cytoplasm. The enzyme catalyses 7-aminomethyl-7-carbaguanosine(34) in tRNA + S-adenosyl-L-methionine = epoxyqueuosine(34) in tRNA + adenine + L-methionine + 2 H(+). It functions in the pathway tRNA modification; tRNA-queuosine biosynthesis. Functionally, transfers and isomerizes the ribose moiety from AdoMet to the 7-aminomethyl group of 7-deazaguanine (preQ1-tRNA) to give epoxyqueuosine (oQ-tRNA). The protein is S-adenosylmethionine:tRNA ribosyltransferase-isomerase of Hamiltonella defensa subsp. Acyrthosiphon pisum (strain 5AT).